The sequence spans 126 residues: Aspartate 1-decarboxylase (126 aa).

The Schiff-base intermediate with substrate; via pyruvic acid role is filled by serine 25. The residue at position 25 (serine 25) is a Pyruvic acid (Ser). Threonine 57 is a substrate binding site. Tyrosine 58 serves as the catalytic Proton donor. Glycine 73–alanine 75 provides a ligand contact to substrate.

It belongs to the PanD family. Heterooctamer of four alpha and four beta subunits. Requires pyruvate as cofactor. In terms of processing, is synthesized initially as an inactive proenzyme, which is activated by self-cleavage at a specific serine bond to produce a beta-subunit with a hydroxyl group at its C-terminus and an alpha-subunit with a pyruvoyl group at its N-terminus.

It is found in the cytoplasm. The enzyme catalyses L-aspartate + H(+) = beta-alanine + CO2. Its pathway is cofactor biosynthesis; (R)-pantothenate biosynthesis; beta-alanine from L-aspartate: step 1/1. Its function is as follows. Catalyzes the pyruvoyl-dependent decarboxylation of aspartate to produce beta-alanine. The chain is Aspartate 1-decarboxylase from Methylobacillus flagellatus (strain ATCC 51484 / DSM 6875 / VKM B-1610 / KT).